A 267-amino-acid chain; its full sequence is Membrane-associated protein Vipp1 (267 aa).

Residues 26–156 (EKVLEQAVID…KANAELQQTL (131 aa)) are a coiled coil. Positions 224–252 (GTSAATPQLEAAPVDSSVPANNASQDDAV) are disordered.

The protein belongs to the PspA/Vipp/IM30 family.

It is found in the cell inner membrane. Required for thylakoid formation. This is Membrane-associated protein Vipp1 from Synechocystis sp. (strain ATCC 27184 / PCC 6803 / Kazusa).